A 177-amino-acid polypeptide reads, in one-letter code: Macro domain-containing protein in non 5'region (177 aa).

The region spanning 1 to 177 is the Macro domain; sequence MSTSVSPVVR…VEFEEVLAMR (177 aa).

The protein belongs to the MacroD-type family.

The chain is Macro domain-containing protein in non 5'region from Streptomyces griseus.